Consider the following 136-residue polypeptide: UPF0216 protein PYRAB16100 (136 aa).

It belongs to the UPF0216 family.

The protein is UPF0216 protein PYRAB16100 of Pyrococcus abyssi (strain GE5 / Orsay).